The chain runs to 397 residues: Elongation factor Tu (397 aa).

The tr-type G domain occupies 10–207 (KPHVNIGTIG…AVDTYIEEPK (198 aa)). Residues 19-26 (GHVDHGKT) form a G1 region. GTP is bound at residue 19 to 26 (GHVDHGKT). Residue Thr26 participates in Mg(2+) binding. The G2 stretch occupies residues 60-64 (GITIN). The interval 81-84 (DCPG) is G3. GTP contacts are provided by residues 81–85 (DCPGH) and 136–139 (NKID). The interval 136 to 139 (NKID) is G4. A G5 region spans residues 177-179 (SAL).

It belongs to the TRAFAC class translation factor GTPase superfamily. Classic translation factor GTPase family. EF-Tu/EF-1A subfamily. As to quaternary structure, monomer.

Its subcellular location is the cytoplasm. The enzyme catalyses GTP + H2O = GDP + phosphate + H(+). Its function is as follows. GTP hydrolase that promotes the GTP-dependent binding of aminoacyl-tRNA to the A-site of ribosomes during protein biosynthesis. This chain is Elongation factor Tu, found in Metamycoplasma hominis (strain ATCC 23114 / DSM 25592 / NBRC 14850 / NCTC 10111 / PG21) (Mycoplasma hominis).